The sequence spans 118 residues: Small ribosomal subunit protein uS13 (118 aa).

The segment at glycine 94–lysine 118 is disordered.

It belongs to the universal ribosomal protein uS13 family. Part of the 30S ribosomal subunit. Forms a loose heterodimer with protein S19. Forms two bridges to the 50S subunit in the 70S ribosome.

Located at the top of the head of the 30S subunit, it contacts several helices of the 16S rRNA. In the 70S ribosome it contacts the 23S rRNA (bridge B1a) and protein L5 of the 50S subunit (bridge B1b), connecting the 2 subunits; these bridges are implicated in subunit movement. Contacts the tRNAs in the A and P-sites. This Pseudomonas aeruginosa (strain LESB58) protein is Small ribosomal subunit protein uS13.